The sequence spans 241 residues: Ribonuclease PH (241 aa).

Residues R89 and 127 to 129 each bind phosphate; that span reads GTR.

Belongs to the RNase PH family. In terms of assembly, homohexameric ring arranged as a trimer of dimers.

The catalysed reaction is tRNA(n+1) + phosphate = tRNA(n) + a ribonucleoside 5'-diphosphate. In terms of biological role, phosphorolytic 3'-5' exoribonuclease that plays an important role in tRNA 3'-end maturation. Removes nucleotide residues following the 3'-CCA terminus of tRNAs; can also add nucleotides to the ends of RNA molecules by using nucleoside diphosphates as substrates, but this may not be physiologically important. Probably plays a role in initiation of 16S rRNA degradation (leading to ribosome degradation) during starvation. The chain is Ribonuclease PH from Xylella fastidiosa (strain 9a5c).